A 173-amino-acid polypeptide reads, in one-letter code: U1 small nuclear ribonucleoprotein C (173 aa).

The segment at 4–36 (YYCDYCDTYLTHDSPSVRKTHCQGRKHKDNVKF) adopts a Matrin-type zinc-finger fold. A disordered region spans residues 72 to 100 (AAIPPPANMQGPPRPVPPGPMGPGPNMLG). The segment covering 73–94 (AIPPPANMQGPPRPVPPGPMGP) has biased composition (pro residues).

It belongs to the U1 small nuclear ribonucleoprotein C family. U1 snRNP is composed of the 7 core Sm proteins B/B', D1, D2, D3, E, F and G that assemble in a heptameric protein ring on the Sm site of the small nuclear RNA to form the core snRNP, and at least 3 U1 snRNP-specific proteins U1-70K, U1-A and U1-C. U1-C interacts with U1 snRNA and the 5' splice-site region of the pre-mRNA.

The protein resides in the nucleus. Functionally, component of the spliceosomal U1 snRNP, which is essential for recognition of the pre-mRNA 5' splice-site and the subsequent assembly of the spliceosome. U1-C is directly involved in initial 5' splice-site recognition for both constitutive and regulated alternative splicing. The interaction with the 5' splice-site seems to precede base-pairing between the pre-mRNA and the U1 snRNA. Stimulates commitment or early (E) complex formation by stabilizing the base pairing of the 5' end of the U1 snRNA and the 5' splice-site region. The polypeptide is U1 small nuclear ribonucleoprotein C (Pediculus humanus subsp. corporis (Body louse)).